The following is a 111-amino-acid chain: MIWLTLVFASLLSVAGQLCQKQATCFVAINKRRKHIVLWLGLALACLGLAMMLWLLVLQNVPVGIAYPMLSLNFVWVTLAAVKLWHEPVSPRHWCGVAFIIGGIVILGSTV.

The next 3 helical transmembrane spans lie at Ile-36–Leu-56, Val-61–Ala-81, and Pro-88–Gly-108. The 70-residue stretch at Leu-40 to Ser-109 folds into the EamA domain.

It belongs to the ArnE family. Heterodimer of ArnE and ArnF.

It localises to the cell inner membrane. The protein operates within bacterial outer membrane biogenesis; lipopolysaccharide biosynthesis. Translocates 4-amino-4-deoxy-L-arabinose-phosphoundecaprenol (alpha-L-Ara4N-phosphoundecaprenol) from the cytoplasmic to the periplasmic side of the inner membrane. The sequence is that of Probable 4-amino-4-deoxy-L-arabinose-phosphoundecaprenol flippase subunit ArnE from Shigella flexneri.